Reading from the N-terminus, the 224-residue chain is Glycerol-3-phosphate acyltransferase (224 aa).

6 helical membrane-spanning segments follow: residues 3-23 (IFLS…IGSL), 54-74 (VFGY…VVFA), 90-112 (LYFY…PIYF), 127-147 (LISI…LLLF), 152-172 (VSLS…IPWM), and 183-203 (GFGQ…LIFW).

This sequence belongs to the PlsY family. In terms of assembly, probably interacts with PlsX.

It is found in the cell membrane. The catalysed reaction is an acyl phosphate + sn-glycerol 3-phosphate = a 1-acyl-sn-glycero-3-phosphate + phosphate. The protein operates within lipid metabolism; phospholipid metabolism. Catalyzes the transfer of an acyl group from acyl-phosphate (acyl-PO(4)) to glycerol-3-phosphate (G3P) to form lysophosphatidic acid (LPA). This enzyme utilizes acyl-phosphate as fatty acyl donor, but not acyl-CoA or acyl-ACP. This is Glycerol-3-phosphate acyltransferase from Mycoplasmopsis synoviae (strain 53) (Mycoplasma synoviae).